The following is a 142-amino-acid chain: Large ribosomal subunit protein uL13 (142 aa).

The protein belongs to the universal ribosomal protein uL13 family. In terms of assembly, part of the 50S ribosomal subunit.

This protein is one of the early assembly proteins of the 50S ribosomal subunit, although it is not seen to bind rRNA by itself. It is important during the early stages of 50S assembly. The polypeptide is Large ribosomal subunit protein uL13 (Aeromonas salmonicida (strain A449)).